We begin with the raw amino-acid sequence, 84 residues long: Small ribosomal subunit protein bS16 (84 aa).

Belongs to the bacterial ribosomal protein bS16 family.

The sequence is that of Small ribosomal subunit protein bS16 from Deinococcus radiodurans (strain ATCC 13939 / DSM 20539 / JCM 16871 / CCUG 27074 / LMG 4051 / NBRC 15346 / NCIMB 9279 / VKM B-1422 / R1).